We begin with the raw amino-acid sequence, 337 residues long: Beta-ketoacyl-[acyl-carrier-protein] synthase III (337 aa).

Active-site residues include C119 and H260. Residues 261–265 (QANQR) form an ACP-binding region. Residue N290 is part of the active site.

The protein belongs to the thiolase-like superfamily. FabH family. As to quaternary structure, homodimer.

The protein resides in the cytoplasm. The enzyme catalyses malonyl-[ACP] + acetyl-CoA + H(+) = 3-oxobutanoyl-[ACP] + CO2 + CoA. It participates in lipid metabolism; fatty acid biosynthesis. Catalyzes the condensation reaction of fatty acid synthesis by the addition to an acyl acceptor of two carbons from malonyl-ACP. Catalyzes the first condensation reaction which initiates fatty acid synthesis and may therefore play a role in governing the total rate of fatty acid production. Possesses both acetoacetyl-ACP synthase and acetyl transacylase activities. Its substrate specificity determines the biosynthesis of branched-chain and/or straight-chain of fatty acids. The protein is Beta-ketoacyl-[acyl-carrier-protein] synthase III of Synechococcus sp. (strain WH7803).